Reading from the N-terminus, the 325-residue chain is Pyruvate dehydrogenase E1 component subunit beta (325 aa).

Position 59 (Glu-59) interacts with thiamine diphosphate.

In terms of assembly, heterodimer of an alpha and a beta chain. It depends on thiamine diphosphate as a cofactor.

It catalyses the reaction N(6)-[(R)-lipoyl]-L-lysyl-[protein] + pyruvate + H(+) = N(6)-[(R)-S(8)-acetyldihydrolipoyl]-L-lysyl-[protein] + CO2. The pyruvate dehydrogenase complex catalyzes the overall conversion of pyruvate to acetyl-CoA and CO(2). It contains multiple copies of three enzymatic components: pyruvate dehydrogenase (E1), dihydrolipoamide acetyltransferase (E2) and lipoamide dehydrogenase (E3). This chain is Pyruvate dehydrogenase E1 component subunit beta (pdhB), found in Rickettsia bellii (strain RML369-C).